A 169-amino-acid chain; its full sequence is Cell division inhibitor SulA (169 aa).

The tract at residues 106–112 (ALRTGNY) is ftsZ binding. Residues 162 to 169 (KIHSNLYH) are lon protease binding.

The protein belongs to the SulA family. Interacts with FtsZ. Post-translationally, is rapidly cleaved and degraded by the Lon protease once DNA damage is repaired.

In terms of biological role, component of the SOS system and an inhibitor of cell division. Accumulation of SulA causes rapid cessation of cell division and the appearance of long, non-septate filaments. In the presence of GTP, binds a polymerization-competent form of FtsZ in a 1:1 ratio, thus inhibiting FtsZ polymerization and therefore preventing it from participating in the assembly of the Z ring. This mechanism prevents the premature segregation of damaged DNA to daughter cells during cell division. The sequence is that of Cell division inhibitor SulA from Escherichia fergusonii (strain ATCC 35469 / DSM 13698 / CCUG 18766 / IAM 14443 / JCM 21226 / LMG 7866 / NBRC 102419 / NCTC 12128 / CDC 0568-73).